The following is a 685-amino-acid chain: Methionine--tRNA ligase (685 aa).

The 'HIGH' region signature appears at 12–22 (PYANGSIHLGH). Residues cysteine 143, cysteine 146, cysteine 156, and cysteine 159 each coordinate Zn(2+). Positions 339–343 (KMSKS) match the 'KMSKS' region motif. Lysine 342 contacts ATP. One can recognise a tRNA-binding domain in the interval 582–685 (DFMKIDMRVA…TGAQPGDKVG (104 aa)).

The protein belongs to the class-I aminoacyl-tRNA synthetase family. MetG type 1 subfamily. In terms of assembly, homodimer. It depends on Zn(2+) as a cofactor.

Its subcellular location is the cytoplasm. It catalyses the reaction tRNA(Met) + L-methionine + ATP = L-methionyl-tRNA(Met) + AMP + diphosphate. In terms of biological role, is required not only for elongation of protein synthesis but also for the initiation of all mRNA translation through initiator tRNA(fMet) aminoacylation. The chain is Methionine--tRNA ligase from Neisseria meningitidis serogroup B (strain ATCC BAA-335 / MC58).